The following is a 208-amino-acid chain: 3-isopropylmalate dehydratase small subunit 2 (208 aa).

This sequence belongs to the LeuD family. LeuD type 1 subfamily. In terms of assembly, heterodimer of LeuC and LeuD.

The catalysed reaction is (2R,3S)-3-isopropylmalate = (2S)-2-isopropylmalate. The protein operates within amino-acid biosynthesis; L-leucine biosynthesis; L-leucine from 3-methyl-2-oxobutanoate: step 2/4. Catalyzes the isomerization between 2-isopropylmalate and 3-isopropylmalate, via the formation of 2-isopropylmaleate. In Salmonella choleraesuis (strain SC-B67), this protein is 3-isopropylmalate dehydratase small subunit 2.